We begin with the raw amino-acid sequence, 70 residues long: MKAIIFFCFLSVMVFIVAEASSLEALKIFEGERECVGENGHCRSWYNDCCDGYYCSCMQPPNCICRNNNG.

The N-terminal stretch at 1–20 (MKAIIFFCFLSVMVFIVAEA) is a signal peptide. Residues 21 to 33 (SSLEALKIFEGER) constitute a propeptide that is removed on maturation. 4 disulfide bridges follow: cysteine 35–cysteine 50, cysteine 42–cysteine 55, cysteine 49–cysteine 65, and cysteine 57–cysteine 63. Asparagine 69 carries the post-translational modification Asparagine amide.

The protein belongs to the neurotoxin 07 (Beta/delta-agtx) family. 04 (aga-5) subfamily. As to expression, expressed by the venom gland.

Its subcellular location is the secreted. Functionally, insecticidal neurotoxin that modulates the insect Nav channel (DmNaV1/tipE (para/tipE)) in a unique manner, with both the activation and inactivation processes being affected. The voltage dependence of activation is shifted toward more hyperpolarized potentials (analogous to site 4 toxins) and a non-inactivating persistent sodium current is induced (site 3-like action). Interestingly, both effects take place in a voltage-dependent manner, producing a bell-shaped curve between -80 and 0 mV. The chain is Mu-agatoxin-Ao1b from Agelena orientalis (Funnel-web spider).